A 340-amino-acid chain; its full sequence is 2-deoxy-scyllo-inosamine dehydrogenase (340 aa).

Zn(2+)-binding residues include cysteine 37, histidine 59, cysteine 89, cysteine 92, cysteine 95, cysteine 103, and glutamate 144.

The protein belongs to the zinc-containing alcohol dehydrogenase family. DOIA dehydrogenase subfamily. The cofactor is Zn(2+).

The catalysed reaction is 2-deoxy-scyllo-inosamine + NADP(+) = 3-amino-2,3-dideoxy-scyllo-inosose + NADPH + H(+). It catalyses the reaction 2-deoxy-scyllo-inosamine + NAD(+) = 3-amino-2,3-dideoxy-scyllo-inosose + NADH + H(+). The protein operates within metabolic intermediate biosynthesis; 2-deoxystreptamine biosynthesis; 2-deoxystreptamine from D-glucose 6-phosphate: step 3/4. It participates in antibiotic biosynthesis; neomycin biosynthesis. Functionally, catalyzes the oxidation of 2-deoxy-scyllo-inosamine (DOIA) with NAD(+) or NADP(+), forming 3-amino-2,3-dideoxy-scyllo-inosose (amino-DOI). The polypeptide is 2-deoxy-scyllo-inosamine dehydrogenase (neoA) (Streptomyces fradiae (Streptomyces roseoflavus)).